A 181-amino-acid polypeptide reads, in one-letter code: uncharacterized protein (181 aa).

The next 2 membrane-spanning stretches (helical) occupy residues Ile24–Val46 and Gly55–Leu77.

The protein resides in the cell membrane. This is an uncharacterized protein from Archaeoglobus fulgidus (strain ATCC 49558 / DSM 4304 / JCM 9628 / NBRC 100126 / VC-16).